Reading from the N-terminus, the 151-residue chain is UPF0756 membrane protein Dred_1676 (151 aa).

The next 4 membrane-spanning stretches (helical) occupy residues 9-29 (VILLLIGLVAQSNLIAICASV), 47-67 (THGLELGLLFLLLSILVPIAT), 75-95 (LLYNVSSLPGFLSIVGGILAT), and 111-131 (IIFGLIVGSVIGIIFFNGQPV).

This sequence belongs to the UPF0756 family.

The protein resides in the cell membrane. The polypeptide is UPF0756 membrane protein Dred_1676 (Desulforamulus reducens (strain ATCC BAA-1160 / DSM 100696 / MI-1) (Desulfotomaculum reducens)).